The following is a 340-amino-acid chain: N-acetyl-gamma-glutamyl-phosphate reductase (340 aa).

The active site involves cysteine 146.

This sequence belongs to the NAGSA dehydrogenase family. Type 1 subfamily.

It localises to the cytoplasm. The catalysed reaction is N-acetyl-L-glutamate 5-semialdehyde + phosphate + NADP(+) = N-acetyl-L-glutamyl 5-phosphate + NADPH + H(+). The protein operates within amino-acid biosynthesis; L-arginine biosynthesis; N(2)-acetyl-L-ornithine from L-glutamate: step 3/4. In terms of biological role, catalyzes the NADPH-dependent reduction of N-acetyl-5-glutamyl phosphate to yield N-acetyl-L-glutamate 5-semialdehyde. The chain is N-acetyl-gamma-glutamyl-phosphate reductase from Streptococcus thermophilus (strain ATCC BAA-491 / LMD-9).